The chain runs to 661 residues: Meiotic coiled-coil protein 1 (661 aa).

Coiled coils occupy residues 38-78, 100-121, 143-184, 304-320, and 360-387; these read LDAL…IIEE, RAIY…ERLS, DIKL…LSIK, ELIQ…EVDL, and LKRL…DNEK. Disordered stretches follow at residues 410-446, 467-562, and 573-592; these read QNQE…LRNI, LIDR…TPAS, and LSRT…TPTQ. Residues 414–430 are compositionally biased toward low complexity; sequence NISSNDNSKSSPESSPP. A compositionally biased stretch (basic and acidic residues) spans 436-445; sequence GKIENKKLRN. Polar residues-rich tracts occupy residues 472 to 481, 548 to 562, and 582 to 592; these read VNQSPDTRSV, HNSV…TPAS, and FTNSLDDTPTQ.

This Schizosaccharomyces pombe (strain 972 / ATCC 24843) (Fission yeast) protein is Meiotic coiled-coil protein 1 (mcp1).